Reading from the N-terminus, the 1194-residue chain is Multidrug efflux ATP-binding/permease protein Rv0194 (1194 aa).

The next 6 membrane-spanning stretches (helical) occupy residues 20–40 (LLLG…VPLV), 56–76 (LAPW…LMYV), 130–150 (LLFD…GVAV), 153–173 (WLSV…GLIA), 258–278 (FALG…FVAF), and 279–299 (WACL…LTIA). The region spanning 21 to 301 (LLGFGAALAG…LAGMLTIAQQ (281 aa)) is the ABC transmembrane type-1 1 domain. Positions 334–568 (LEFQRVSFGY…CPRYRELLSP (235 aa)) constitute an ABC transporter 1 domain. ATP is bound at residue 367–374 (GAPGSGKS). The next 6 helical transmembrane spans lie at 628–648 (ALSL…PLLI), 660–680 (VLSA…IRWV), 743–763 (LVVA…LLAI), 765–785 (ARLV…TWQF), 847–867 (LLAL…TLVL), and 878–898 (VISV…YTPI). Residues 628–910 (ALSLLLVAVQ…LAQMFDDYQR (283 aa)) enclose the ABC transmembrane type-1 2 domain. The ABC transporter 2 domain maps to 942–1177 (VVFDAVHYSY…GGHYSRLWAA (236 aa)). 976–983 (GSTGSGKS) serves as a coordination point for ATP.

The protein belongs to the ABC transporter superfamily. Lipid exporter (TC 3.A.1.106) family.

It localises to the cell inner membrane. Its activity is regulated as follows. Efflux is inhibited by reserpine. In terms of biological role, overexpression in M.smegmatis increases resistance to erythromycin, ampicillin, novobiocin and vancomycin. It also reduces accumulation of ethidium bromide in the cell. This chain is Multidrug efflux ATP-binding/permease protein Rv0194, found in Mycobacterium tuberculosis (strain ATCC 25618 / H37Rv).